Reading from the N-terminus, the 513-residue chain is Putative ribose/galactose/methyl galactoside import ATP-binding protein 3 (513 aa).

2 consecutive ABC transporter domains span residues 15-252 and 263-508; these read IELT…VGRQ and TSAN…TQRE. 47–54 provides a ligand contact to ATP; that stretch reads GENGAGKS.

This sequence belongs to the ABC transporter superfamily. Carbohydrate importer 2 (CUT2) (TC 3.A.1.2) family.

The protein resides in the cell inner membrane. It carries out the reaction D-ribose(out) + ATP + H2O = D-ribose(in) + ADP + phosphate + H(+). It catalyses the reaction D-galactose(out) + ATP + H2O = D-galactose(in) + ADP + phosphate + H(+). In terms of biological role, part of an ABC transporter complex involved in carbohydrate import. Could be involved in ribose, galactose and/or methyl galactoside import. Responsible for energy coupling to the transport system. The polypeptide is Putative ribose/galactose/methyl galactoside import ATP-binding protein 3 (Burkholderia ambifaria (strain ATCC BAA-244 / DSM 16087 / CCUG 44356 / LMG 19182 / AMMD) (Burkholderia cepacia (strain AMMD))).